The chain runs to 372 residues: Ribosomal RNA small subunit methyltransferase H (372 aa).

Residues 44–46, Asp63, Leu97, Asp111, and Gln118 contribute to the S-adenosyl-L-methionine site; that span reads GGH. Over residues 315–334 the composition is skewed to basic and acidic residues; the sequence is RAAERLDPTAEQRRRTDRER. The tract at residues 315–372 is disordered; sequence RAAERLDPTAEQRRRTDRERYRRRVRAMHQPGTGSAVRRPTPGDDGTGTDEEGEGHDS. Residues 361–372 show a composition bias toward acidic residues; it reads TGTDEEGEGHDS.

It belongs to the methyltransferase superfamily. RsmH family.

The protein localises to the cytoplasm. It catalyses the reaction cytidine(1402) in 16S rRNA + S-adenosyl-L-methionine = N(4)-methylcytidine(1402) in 16S rRNA + S-adenosyl-L-homocysteine + H(+). Functionally, specifically methylates the N4 position of cytidine in position 1402 (C1402) of 16S rRNA. The chain is Ribosomal RNA small subunit methyltransferase H from Salinispora arenicola (strain CNS-205).